A 623-amino-acid polypeptide reads, in one-letter code: Dictomallein-5 (623 aa).

The N-terminal stretch at 1 to 21 is a signal peptide; the sequence is MKIFIIKIILVLFNYVLLSYS. The Peptidase M66 domain occupies 174 to 435; sequence PNVGQDYTLK…QNYFKNSIYY (262 aa). Residue histidine 327 coordinates Zn(2+). The active site involves glutamate 328. Positions 331 and 337 each coordinate Zn(2+).

The protein belongs to the dictomallein family. It depends on Zn(2+) as a cofactor.

Its subcellular location is the secreted. This chain is Dictomallein-5 (dtmlE), found in Dictyostelium discoideum (Social amoeba).